Reading from the N-terminus, the 473-residue chain is Putative tyrosine recombinase XerC (473 aa).

Residues 4–82 (MTLPELTQEY…HLRTVYRYAM (79 aa)) enclose the Core-binding (CB) domain. A Tyr recombinase domain is found at 118–305 (RNWLRFLVQE…DYDLMREVMN (188 aa)). Catalysis depends on residues arginine 156, lysine 183, histidine 256, arginine 259, and histidine 283. Residue tyrosine 292 is the O-(3'-phospho-DNA)-tyrosine intermediate of the active site. Residues 341–352 (SGTELQPATTES) show a composition bias toward polar residues. The disordered stretch occupies residues 341–365 (SGTELQPATTESSEAKKADDTASNP).

Belongs to the 'phage' integrase family.

The protein localises to the cytoplasm. Its function is as follows. Site-specific tyrosine recombinase, which acts by catalyzing the cutting and rejoining of the recombining DNA molecules. The protein is Putative tyrosine recombinase XerC of Pseudomonas syringae.